The sequence spans 93 residues: UPF0223 protein str0998 (93 aa).

Belongs to the UPF0223 family.

The sequence is that of UPF0223 protein str0998 from Streptococcus thermophilus (strain CNRZ 1066).